Here is a 304-residue protein sequence, read N- to C-terminus: UDP-N-acetylenolpyruvoylglucosamine reductase (304 aa).

The FAD-binding PCMH-type domain occupies 33–198; the sequence is RVGGPADILV…IEATIELESG (166 aa). R177 is a catalytic residue. S227 acts as the Proton donor in catalysis. E297 is an active-site residue.

Belongs to the MurB family. FAD is required as a cofactor.

It localises to the cytoplasm. The enzyme catalyses UDP-N-acetyl-alpha-D-muramate + NADP(+) = UDP-N-acetyl-3-O-(1-carboxyvinyl)-alpha-D-glucosamine + NADPH + H(+). Its pathway is cell wall biogenesis; peptidoglycan biosynthesis. Cell wall formation. The chain is UDP-N-acetylenolpyruvoylglucosamine reductase from Clostridium perfringens (strain SM101 / Type A).